The following is a 508-amino-acid chain: Photosystem II CP47 reaction center protein (508 aa).

Transmembrane regions (helical) follow at residues 21-36 (AVHIMHTALVSGWAGS), 101-115 (IVFSGLCFLAAIWHW), 140-156 (GIHLFLSGLACFGFGAF), 203-218 (IAAGTLGILAGLFHLS), 237-252 (VLSSSIAAVFFAAFVV), and 457-472 (SFALLFFFGHIWHGAR).

The protein belongs to the PsbB/PsbC family. PsbB subfamily. PSII is composed of 1 copy each of membrane proteins PsbA, PsbB, PsbC, PsbD, PsbE, PsbF, PsbH, PsbI, PsbJ, PsbK, PsbL, PsbM, PsbT, PsbX, PsbY, PsbZ, Psb30/Ycf12, at least 3 peripheral proteins of the oxygen-evolving complex and a large number of cofactors. It forms dimeric complexes. The cofactor is Binds multiple chlorophylls. PSII binds additional chlorophylls, carotenoids and specific lipids..

It is found in the plastid. The protein resides in the chloroplast thylakoid membrane. In terms of biological role, one of the components of the core complex of photosystem II (PSII). It binds chlorophyll and helps catalyze the primary light-induced photochemical processes of PSII. PSII is a light-driven water:plastoquinone oxidoreductase, using light energy to abstract electrons from H(2)O, generating O(2) and a proton gradient subsequently used for ATP formation. This is Photosystem II CP47 reaction center protein from Ranunculus macranthus (Large buttercup).